The primary structure comprises 657 residues: Glycogen debranching enzyme (657 aa).

The active-site Nucleophile is aspartate 336. Glutamate 371 acts as the Proton donor in catalysis. The interval alanine 460–lysine 479 is disordered.

The protein belongs to the glycosyl hydrolase 13 family.

It carries out the reaction Hydrolysis of (1-&gt;6)-alpha-D-glucosidic linkages to branches with degrees of polymerization of three or four glucose residues in limit dextrin.. It participates in glycan degradation; glycogen degradation. Functionally, removes maltotriose and maltotetraose chains that are attached by 1,6-alpha-linkage to the limit dextrin main chain, generating a debranched limit dextrin. The chain is Glycogen debranching enzyme from Escherichia coli (strain UTI89 / UPEC).